Consider the following 274-residue polypeptide: Penicillin-insensitive murein endopeptidase (274 aa).

The signal sequence occupies residues 1–19 (MNKTAIALLALLASSASLA). 3 disulfides stabilise this stretch: Cys-44–Cys-265, Cys-187–Cys-235, and Cys-216–Cys-223. Residues His-110, His-113, Asp-120, Asp-147, His-150, and His-211 each contribute to the Zn(2+) site. The tract at residues 227–274 (PLPPPGDGCGAELQSWFEPPKPGTTKPEKKTPPPLPPSCQALLDEHVI) is disordered.

This sequence belongs to the peptidase M74 family. As to quaternary structure, dimer. Requires Zn(2+) as cofactor.

Its subcellular location is the periplasm. Functionally, murein endopeptidase that cleaves the D-alanyl-meso-2,6-diamino-pimelyl amide bond that connects peptidoglycan strands. Likely plays a role in the removal of murein from the sacculus. This chain is Penicillin-insensitive murein endopeptidase, found in Escherichia coli O6:K15:H31 (strain 536 / UPEC).